Here is a 64-residue protein sequence, read N- to C-terminus: Large ribosomal subunit protein uL30 (64 aa).

It belongs to the universal ribosomal protein uL30 family. In terms of assembly, part of the 50S ribosomal subunit.

This Bdellovibrio bacteriovorus (strain ATCC 15356 / DSM 50701 / NCIMB 9529 / HD100) protein is Large ribosomal subunit protein uL30.